The chain runs to 217 residues: Enolase-phosphatase E1 (217 aa).

Positions 9 and 11 each coordinate Mg(2+). Substrate is bound by residues 112 to 113 (SS) and lysine 151. Position 176 (aspartate 176) interacts with Mg(2+).

The protein belongs to the HAD-like hydrolase superfamily. MasA/MtnC family. Monomer. Mg(2+) serves as cofactor.

The protein resides in the cytoplasm. Its subcellular location is the nucleus. It catalyses the reaction 5-methylsulfanyl-2,3-dioxopentyl phosphate + H2O = 1,2-dihydroxy-5-(methylsulfanyl)pent-1-en-3-one + phosphate. The protein operates within amino-acid biosynthesis; L-methionine biosynthesis via salvage pathway; L-methionine from S-methyl-5-thio-alpha-D-ribose 1-phosphate: step 3/6. It functions in the pathway amino-acid biosynthesis; L-methionine biosynthesis via salvage pathway; L-methionine from S-methyl-5-thio-alpha-D-ribose 1-phosphate: step 4/6. Bifunctional enzyme that catalyzes the enolization of 2,3-diketo-5-methylthiopentyl-1-phosphate (DK-MTP-1-P) into the intermediate 2-hydroxy-3-keto-5-methylthiopentenyl-1-phosphate (HK-MTPenyl-1-P), which is then dephosphorylated to form the acireductone 1,2-dihydroxy-3-keto-5-methylthiopentene (DHK-MTPene). This Lachancea thermotolerans (strain ATCC 56472 / CBS 6340 / NRRL Y-8284) (Yeast) protein is Enolase-phosphatase E1.